The sequence spans 217 residues: UPF0111 protein MTH_1689 (217 aa).

It belongs to the UPF0111 family.

The chain is UPF0111 protein MTH_1689 from Methanothermobacter thermautotrophicus (strain ATCC 29096 / DSM 1053 / JCM 10044 / NBRC 100330 / Delta H) (Methanobacterium thermoautotrophicum).